The sequence spans 195 residues: MTRKKDETPAEKVEARLESFYREKVVPVMMERFQYSNVMMVPKLEKISINIGVGEAAAEPKLLETAMLELGQITGQKPQVRKSRKAISNFKLRENQAIGCRVTLRRKKMYEFLDRFVSLAVPRIRDFRGLSNTSFDGRGNYTAGIREQIIFPEIDIDKVPRICGMDISFVTSAATDEEAYVLLAELGMPFKKKNN.

This sequence belongs to the universal ribosomal protein uL5 family. Part of the 50S ribosomal subunit; part of the 5S rRNA/L5/L18/L25 subcomplex. Contacts the 5S rRNA and the P site tRNA. Forms a bridge to the 30S subunit in the 70S ribosome.

Functionally, this is one of the proteins that bind and probably mediate the attachment of the 5S RNA into the large ribosomal subunit, where it forms part of the central protuberance. In the 70S ribosome it contacts protein S13 of the 30S subunit (bridge B1b), connecting the 2 subunits; this bridge is implicated in subunit movement. Contacts the P site tRNA; the 5S rRNA and some of its associated proteins might help stabilize positioning of ribosome-bound tRNAs. The polypeptide is Large ribosomal subunit protein uL5 (Chlorobium phaeobacteroides (strain DSM 266 / SMG 266 / 2430)).